Reading from the N-terminus, the 362-residue chain is Dual-specificity RNA methyltransferase RlmN (362 aa).

The Proton acceptor role is filled by Glu100. In terms of domain architecture, Radical SAM core spans 106-345 (EPDRNTLCIS…VFIRNSRGED (240 aa)). Cysteines 113 and 350 form a disulfide. [4Fe-4S] cluster contacts are provided by Cys120, Cys124, and Cys127. Residues 177 to 178 (GE), Ser209, 231 to 233 (SLH), and Asn307 contribute to the S-adenosyl-L-methionine site. Cys350 (S-methylcysteine intermediate) is an active-site residue.

It belongs to the radical SAM superfamily. RlmN family. The cofactor is [4Fe-4S] cluster.

It is found in the cytoplasm. The catalysed reaction is adenosine(2503) in 23S rRNA + 2 reduced [2Fe-2S]-[ferredoxin] + 2 S-adenosyl-L-methionine = 2-methyladenosine(2503) in 23S rRNA + 5'-deoxyadenosine + L-methionine + 2 oxidized [2Fe-2S]-[ferredoxin] + S-adenosyl-L-homocysteine. It carries out the reaction adenosine(37) in tRNA + 2 reduced [2Fe-2S]-[ferredoxin] + 2 S-adenosyl-L-methionine = 2-methyladenosine(37) in tRNA + 5'-deoxyadenosine + L-methionine + 2 oxidized [2Fe-2S]-[ferredoxin] + S-adenosyl-L-homocysteine. Specifically methylates position 2 of adenine 2503 in 23S rRNA and position 2 of adenine 37 in tRNAs. m2A2503 modification seems to play a crucial role in the proofreading step occurring at the peptidyl transferase center and thus would serve to optimize ribosomal fidelity. The chain is Dual-specificity RNA methyltransferase RlmN from Desulfotalea psychrophila (strain LSv54 / DSM 12343).